The sequence spans 249 residues: uncharacterized protein (249 aa).

The first 36 residues, 1-36 (MAKSPARRCTAKVRRVLSRSVLILCWSLLGAAPAHA), serve as a signal peptide directing secretion. A disordered region spans residues 227–249 (ARQPPGRWVCPSSAGGPIGWHRQ).

This is an uncharacterized protein from Mycobacterium tuberculosis (strain CDC 1551 / Oshkosh).